A 432-amino-acid polypeptide reads, in one-letter code: Phosphomethylpyrimidine synthase (432 aa).

Substrate is bound by residues Asn66, Met95, Tyr124, His163, 185-187 (SRG), 226-229 (DGMR), and Glu265. Residue His269 participates in Zn(2+) binding. Tyr292 is a substrate binding site. His333 is a binding site for Zn(2+). Cys409, Cys412, and Cys416 together coordinate [4Fe-4S] cluster.

It belongs to the ThiC family. Requires [4Fe-4S] cluster as cofactor.

It carries out the reaction 5-amino-1-(5-phospho-beta-D-ribosyl)imidazole + S-adenosyl-L-methionine = 4-amino-2-methyl-5-(phosphooxymethyl)pyrimidine + CO + 5'-deoxyadenosine + formate + L-methionine + 3 H(+). Its pathway is cofactor biosynthesis; thiamine diphosphate biosynthesis. In terms of biological role, catalyzes the synthesis of the hydroxymethylpyrimidine phosphate (HMP-P) moiety of thiamine from aminoimidazole ribotide (AIR) in a radical S-adenosyl-L-methionine (SAM)-dependent reaction. The chain is Phosphomethylpyrimidine synthase from Desulforudis audaxviator (strain MP104C).